A 600-amino-acid chain; its full sequence is Chaperone protein DnaK (600 aa).

Thr-175 is modified (phosphothreonine; by autocatalysis). Positions 569 to 578 (SFAQATAQQA) are enriched in low complexity. The tract at residues 569–600 (SFAQATAQQANTSESDPKADDSNTIDAEIKQD) is disordered. Basic and acidic residues predominate over residues 583–600 (SDPKADDSNTIDAEIKQD).

The protein belongs to the heat shock protein 70 family.

In terms of biological role, acts as a chaperone. The chain is Chaperone protein DnaK from Mesomycoplasma hyopneumoniae (strain 7448) (Mycoplasma hyopneumoniae).